We begin with the raw amino-acid sequence, 2552 residues long: Probable polyketide synthase 40 (2552 aa).

Residues 13-443 (CNKVAIIGIG…GSNCCLIVSS (431 aa)) enclose the Ketosynthase family 3 (KS3) domain. Residues cysteine 179, histidine 320, and histidine 362 each act as for beta-ketoacyl synthase activity in the active site. Residues 629–662 (GIKPSIIVGHSLGEISSSYCSGMIDLDTFCYLIY) form an acyl/malonyl transferase region. Residue serine 639 is the For acyl/malonyl transferase activity of the active site. Residues 928–1063 (INHLGISNSN…ANFQLFSRGQ (136 aa)) form an N-terminal hotdog fold region. In terms of domain architecture, PKS/mFAS DH spans 928 to 1235 (INHLGISNSN…FKSTTKIKDS (308 aa)). Residue histidine 962 is the Proton acceptor; for dehydratase activity of the active site. The C-terminal hotdog fold stretch occupies residues 1087 to 1235 (NLTKLSKQEL…FKSTTKIKDS (149 aa)). The active-site Proton donor; for dehydratase activity is the aspartate 1149. A Carrier domain is found at 2467–2546 (DNVELTVDQL…SFIQLVKNSI (80 aa)). The residue at position 2505 (serine 2505) is an O-(pantetheine 4'-phosphoryl)serine.

The cofactor is pantetheine 4'-phosphate.

In terms of biological role, probable polyketide synthase. In Dictyostelium discoideum (Social amoeba), this protein is Probable polyketide synthase 40 (pks40).